Reading from the N-terminus, the 398-residue chain is Acetate kinase (398 aa).

Residue asparagine 7 coordinates Mg(2+). Residue lysine 14 participates in ATP binding. Arginine 91 lines the substrate pocket. The active-site Proton donor/acceptor is the aspartate 148. Residues histidine 208–glycine 212, aspartate 283–arginine 285, and glycine 331–asparagine 335 contribute to the ATP site. Glutamate 384 provides a ligand contact to Mg(2+).

Belongs to the acetokinase family. In terms of assembly, homodimer. It depends on Mg(2+) as a cofactor. Mn(2+) serves as cofactor.

The protein localises to the cytoplasm. It carries out the reaction acetate + ATP = acetyl phosphate + ADP. The protein operates within metabolic intermediate biosynthesis; acetyl-CoA biosynthesis; acetyl-CoA from acetate: step 1/2. In terms of biological role, catalyzes the formation of acetyl phosphate from acetate and ATP. Can also catalyze the reverse reaction. The chain is Acetate kinase from Phocaeicola vulgatus (strain ATCC 8482 / DSM 1447 / JCM 5826 / CCUG 4940 / NBRC 14291 / NCTC 11154) (Bacteroides vulgatus).